Consider the following 336-residue polypeptide: MVVKVGINGFGRIGRLAFRRIQNIEGVEVTRINDLTDPNMLAHLLKYDTTQGRFDGTVEVKEGGFEVNGNFIKVSAERDPENIDWATDGVEIVLEATGFFAKKEAAEKHLHANGAKKVVITAPGGNDVKTVVFNTNHDILDGTETVISGASCTTNCLAPMAKALHDAFGIQKGLMTTIHAYTGDQMILDGPHRGGDLRRARAGAANIVPNSTGAAKAIGLVIPELNGKLDGAAQRVPVPTGSVTELVVTLDKNVSVDEINAAMKAASNDSFGYTEDPIVSSDIVGVSYGSLFDATQTKVMEVDGSQLVKVVSWYDNEMSYTAQLVRTLEYFAKIAK.

NAD(+) is bound by residues 12–13, D34, R78, and T121; that span reads RI. Residues 151 to 153, T182, R199, 212 to 213, and R235 each bind D-glyceraldehyde 3-phosphate; these read SCT and TG. Residue C152 is the Nucleophile of the active site. N316 provides a ligand contact to NAD(+).

Belongs to the glyceraldehyde-3-phosphate dehydrogenase family. Homotetramer.

Its subcellular location is the cytoplasm. It carries out the reaction D-glyceraldehyde 3-phosphate + phosphate + NAD(+) = (2R)-3-phospho-glyceroyl phosphate + NADH + H(+). It participates in carbohydrate degradation; glycolysis; pyruvate from D-glyceraldehyde 3-phosphate: step 1/5. Catalyzes the oxidative phosphorylation of glyceraldehyde 3-phosphate (G3P) to 1,3-bisphosphoglycerate (BPG) using the cofactor NAD. The first reaction step involves the formation of a hemiacetal intermediate between G3P and a cysteine residue, and this hemiacetal intermediate is then oxidized to a thioester, with concomitant reduction of NAD to NADH. The reduced NADH is then exchanged with the second NAD, and the thioester is attacked by a nucleophilic inorganic phosphate to produce BPG. The polypeptide is Glyceraldehyde-3-phosphate dehydrogenase (gap) (Streptococcus pyogenes serotype M1).